The primary structure comprises 341 residues: NADH-ubiquinone oxidoreductase chain 2 (341 aa).

A run of 9 helical transmembrane segments spans residues 8–28 (IFLI…SWLG), 61–81 (FLTQ…LMFL), 95–115 (ILIL…FWFP), 145–165 (FIYN…SLGG), 174–191 (LMAF…LAMM), 195–215 (MLWM…VLMF), 238–258 (LLIF…GFLP), 272–292 (LFIL…YLRL), and 321–341 (LIFN…YIIM).

The protein belongs to the complex I subunit 2 family.

It is found in the mitochondrion inner membrane. The enzyme catalyses a ubiquinone + NADH + 5 H(+)(in) = a ubiquinol + NAD(+) + 4 H(+)(out). Core subunit of the mitochondrial membrane respiratory chain NADH dehydrogenase (Complex I) that is believed to belong to the minimal assembly required for catalysis. Complex I functions in the transfer of electrons from NADH to the respiratory chain. The immediate electron acceptor for the enzyme is believed to be ubiquinone. This chain is NADH-ubiquinone oxidoreductase chain 2 (mt:ND2), found in Anopheles gambiae (African malaria mosquito).